The sequence spans 354 residues: S-adenosylmethionine:tRNA ribosyltransferase-isomerase (354 aa).

Belongs to the QueA family. As to quaternary structure, monomer.

The protein resides in the cytoplasm. The enzyme catalyses 7-aminomethyl-7-carbaguanosine(34) in tRNA + S-adenosyl-L-methionine = epoxyqueuosine(34) in tRNA + adenine + L-methionine + 2 H(+). It functions in the pathway tRNA modification; tRNA-queuosine biosynthesis. Its function is as follows. Transfers and isomerizes the ribose moiety from AdoMet to the 7-aminomethyl group of 7-deazaguanine (preQ1-tRNA) to give epoxyqueuosine (oQ-tRNA). This chain is S-adenosylmethionine:tRNA ribosyltransferase-isomerase, found in Thermosynechococcus vestitus (strain NIES-2133 / IAM M-273 / BP-1).